The sequence spans 332 residues: Alpha/beta hydrolase domain-containing protein aho-3 (332 aa).

Residues 1–15 (MSSGAPSGSSMSSTP) are compositionally biased toward low complexity. The disordered stretch occupies residues 1-24 (MSSGAPSGSSMSSTPGSPPPRAGG). Catalysis depends on charge relay system residues Ser191, Asp256, and His285.

The protein belongs to the AB hydrolase superfamily. ABHD17 family. Palmitoylated on cysteine residues located in a cysteine cluster at the N-terminus which promotes membrane localization and localization to sensory neuron endings. Expressed in a subset of neurons including AIY, HSN, ADF, AFD, AWC, AWB and NSM, hypodermis, pharyngeal muscle and intestine.

The protein localises to the cell membrane. It localises to the cytoplasmic vesicle membrane. The enzyme catalyses S-hexadecanoyl-L-cysteinyl-[protein] + H2O = L-cysteinyl-[protein] + hexadecanoate + H(+). Functionally, hydrolyzes fatty acids from S-acylated cysteine residues in proteins. Acts in sensory neurons including AWC to regulate starvation-induced thermotaxis plasticity and salt learning behavior. The protein is Alpha/beta hydrolase domain-containing protein aho-3 of Caenorhabditis elegans.